We begin with the raw amino-acid sequence, 299 residues long: Junctional adhesion molecule A (299 aa).

Residues 1–27 (MGTKAQVERKLLCLFILAILLCSLALG) form the signal peptide. Ig-like V-type domains follow at residues 28-125 (SVTV…VKVK) and 135-228 (PTVN…NAVR). Topologically, residues 28-238 (SVTVHSSEPE…MEAVERNVGV (211 aa)) are extracellular. 2 cysteine pairs are disulfide-bonded: Cys-50–Cys-109 and Cys-153–Cys-212. Asn-185 carries N-linked (GlcNAc...) asparagine glycosylation. Residues 239 to 259 (IVAAVLVTLILLGILVFGIWF) form a helical membrane-spanning segment. Residues 260-299 (AYSRGHFDRTKKGTSSKKVIYSQPSARSEGEFKQTSSFLV) lie on the Cytoplasmic side of the membrane. 3 positions are modified to phosphoserine: Ser-281, Ser-284, and Ser-287.

The protein belongs to the immunoglobulin superfamily. As to quaternary structure, interacts with the ninth PDZ domain of MPDZ. Interacts with the first PDZ domain of PARD3. The association between PARD3 and PARD6B probably disrupts this interaction. Interacts with ITGAL (via I-domain). Interacts with CD151. In terms of assembly, (Microbial infection) Interacts with Mammalian reovirus sigma-1 capsid protein. (Microbial infection) Interacts with Human Rotavirus strain Wa vp4 capsid protein. N-glycosylated. Post-translationally, (Microbial infection) Cleaved by H.pylori virulence factor PqqE. Cleavage leads to altered tight junction functions. In terms of tissue distribution, expressed in endothelium, epithelium and leukocytes (at protein level).

It localises to the cell junction. The protein resides in the tight junction. It is found in the cell membrane. In terms of biological role, seems to play a role in epithelial tight junction formation. Appears early in primordial forms of cell junctions and recruits PARD3. The association of the PARD6-PARD3 complex may prevent the interaction of PARD3 with JAM1, thereby preventing tight junction assembly. Plays a role in regulating monocyte transmigration involved in integrity of epithelial barrier. Ligand for integrin alpha-L/beta-2 involved in memory T-cell and neutrophil transmigration. Involved in platelet activation. Its function is as follows. (Microbial infection) Acts as a receptor for Mammalian reovirus sigma-1. Functionally, (Microbial infection) Acts as a receptor for Human Rotavirus strain Wa. In Homo sapiens (Human), this protein is Junctional adhesion molecule A (F11R).